The sequence spans 126 residues: Ribulose bisphosphate carboxylase small subunit, chloroplastic 1 (126 aa).

Belongs to the RuBisCO small chain family. Heterohexadecamer of 8 large and 8 small subunits.

It is found in the plastid. It localises to the chloroplast. RuBisCO catalyzes two reactions: the carboxylation of D-ribulose 1,5-bisphosphate, the primary event in carbon dioxide fixation, as well as the oxidative fragmentation of the pentose substrate. Both reactions occur simultaneously and in competition at the same active site. Although the small subunit is not catalytic it is essential for maximal activity. In Acetabularia peniculus (Green alga), this protein is Ribulose bisphosphate carboxylase small subunit, chloroplastic 1.